We begin with the raw amino-acid sequence, 1535 residues long: ABC multidrug transporter atrF (1535 aa).

The interval 1–115 is disordered; that stretch reads MADDHRQPEA…DEQASSTDEY (115 aa). Residue Asn33 is glycosylated (N-linked (GlcNAc...) asparagine). A compositionally biased stretch (low complexity) spans 34–45; it reads TTSTSETDASAD. Over residues 46 to 76 the composition is skewed to basic and acidic residues; sequence ADARWGERNQGDPVSRRGAMEEFEEMRREVT. Positions 79–93 are enriched in basic residues; sequence SLHRTRSAKDARRRS. 4 N-linked (GlcNAc...) asparagine glycosylation sites follow: Asn149, Asn274, Asn287, and Asn351. An ABC transporter 1 domain is found at 185–427; sequence VPALHFGKRP…FVDLGFYCPE (243 aa). 7 consecutive transmembrane segments (helical) span residues 540–560, 573–593, 618–638, 646–666, 680–700, 703–723, and 791–811; these read LYTK…LFYG, GALF…MPAV, VVVD…IVYF, ASKF…ITSL, AVRF…YVIP, GLID…LSYS, and FGVV…AAEV. Residues 834 to 868 are disordered; sequence KAQNGKGNDEEQVQNTGDNAALSRGEAKSSSSGEA. In terms of domain architecture, ABC transporter 2 spans 879–1117; it reads FTWSNVEYTV…DVIKYFADRG (239 aa). An N-linked (GlcNAc...) asparagine glycan is attached at Asn892. An ATP-binding site is contributed by 915–922; that stretch reads GASGAGKT. The next 6 helical transmembrane spans lie at 1212 to 1232, 1246 to 1266, 1295 to 1315, 1320 to 1340, 1342 to 1362, and 1384 to 1406; these read YGKL…FWML, IFLI…KFYI, IPMA…PVGF, SSAG…ASWG, WICA…FFFV, and WMYY…FPSV. The N-linked (GlcNAc...) asparagine glycan is linked to Asn1459. Helical transmembrane passes span 1477–1497 and 1503–1523; these read CFGI…FFIY and GWSF…EGVK.

Belongs to the ABC transporter superfamily. ABCG family. PDR (TC 3.A.1.205) subfamily.

The protein resides in the cell membrane. It catalyses the reaction voriconazole(in) + ATP + H2O = voriconazole(out) + ADP + phosphate + H(+). Pleiotropic ABC efflux transporter involved in the basal level of azole susceptibility. Confers resistance to voriconazole. This is ABC multidrug transporter atrF from Aspergillus flavus (strain ATCC 200026 / FGSC A1120 / IAM 13836 / NRRL 3357 / JCM 12722 / SRRC 167).